A 260-amino-acid chain; its full sequence is Small ribosomal subunit protein bS6 (260 aa).

Belongs to the bacterial ribosomal protein bS6 family.

Functionally, binds together with bS18 to 16S ribosomal RNA. This is Small ribosomal subunit protein bS6 from Wolbachia sp. subsp. Brugia malayi (strain TRS).